The primary structure comprises 373 residues: SH3 domain-binding protein 5-like (373 aa).

The disordered stretch occupies residues M1–I53. A compositionally biased stretch (polar residues) spans T34–S45. Coiled-coil stretches lie at residues E55–R98 and W170–I272. 2 disordered regions span residues R276–P305 and T344–L373. The span at T344–D358 shows a compositional bias: basic and acidic residues.

Belongs to the SH3BP5 family.

Functionally, functions as a guanine nucleotide exchange factor (GEF) for rab11a. This is SH3 domain-binding protein 5-like (sh3bp5l) from Xenopus tropicalis (Western clawed frog).